The chain runs to 738 residues: Glycogen [starch] synthase, muscle (738 aa).

Serine 8 is subject to Phosphoserine; by AMPK and PKA. Serine 11 carries the post-translational modification Phosphoserine. Position 39 (lysine 39) interacts with UDP. Histidine 205 and arginine 211 together coordinate UDP-alpha-D-glucose. 5 residues coordinate alpha-D-glucose 6-phosphate: histidine 291, glutamate 292, glutamine 294, histidine 297, and lysine 301. Arginine 331 is a binding site for UDP. Arginine 331 lines the UDP-alpha-D-glucose pocket. Serine 412 carries the phosphoserine modification. Histidine 501 serves as a coordination point for alpha-D-glucose 6-phosphate. Glutamate 510, tryptophan 512, and glycine 513 together coordinate UDP-alpha-D-glucose. Threonine 515 serves as a coordination point for UDP. Arginine 582 and arginine 586 together coordinate alpha-D-glucose 6-phosphate. Residues 632–738 are disordered; that stretch reads QGYRYPRPAS…PTSSLGEERN (107 aa). Serine 641 and serine 645 each carry phosphoserine. Position 649 is a phosphoserine; by GSK3-alpha and GSK3-beta (serine 649). Residues serine 652, serine 653, serine 657, and serine 672 each carry the phosphoserine modification. The span at 682–695 shows a compositional bias: basic and acidic residues; sequence AKDRRNIRAPEWPR. A phosphoserine mark is found at serine 698, serine 709, and serine 711. The segment covering 698-738 has biased composition (low complexity); sequence SCSSSTGGSKRSNSVDTGPSSSLSTPTEPLSPTSSLGEERN. Threonine 722 carries the phosphothreonine modification. 2 positions are modified to phosphoserine: serine 728 and serine 732.

This sequence belongs to the glycosyltransferase 3 family. As to quaternary structure, part of the GYS1-GYG1 complex, a heterooctamer composed of a tetramer of GYS1 and 2 dimers of GYG1, where each GYS1 protomer binds to one GYG1 subunit (via GYG1 C-terminus); the GYS1 tetramer may dissociate from GYG1 dimers to continue glycogen polymerization on its own. Post-translationally, phosphorylation at Ser-8 by AMPK inactivates the enzyme activity. Primed phosphorylation at Ser-657 (site 5) by CSNK2A1 and CSNK2A2 is required for inhibitory phosphorylation at Ser-641 (site 3a), Ser-645 (site 3b), Ser-649 (site 3c) and Ser-653 (site 4) by GSK3A an GSK3B. Phosphorylated at Ser-641 by PASK, leading to inactivation; phosphorylation by PASK is inhibited by glycogen. Phosphorylated at Ser-641 by DYRK2, leading to inactivation. Dephosphorylation at Ser-641 and Ser-645 by PP1 activates the enzyme.

The catalysed reaction is [(1-&gt;4)-alpha-D-glucosyl](n) + UDP-alpha-D-glucose = [(1-&gt;4)-alpha-D-glucosyl](n+1) + UDP + H(+). It participates in glycan biosynthesis; glycogen biosynthesis. Its activity is regulated as follows. Allosteric activation by glucose-6-phosphate. Phosphorylation reduces the activity towards UDP-glucose. When in the non-phosphorylated state, glycogen synthase does not require glucose-6-phosphate as an allosteric activator; when phosphorylated it does. Its function is as follows. Glycogen synthase participates in the glycogen biosynthetic process along with glycogenin and glycogen branching enzyme. Extends the primer composed of a few glucose units formed by glycogenin by adding new glucose units to it. In this context, glycogen synthase transfers the glycosyl residue from UDP-Glc to the non-reducing end of alpha-1,4-glucan. This chain is Glycogen [starch] synthase, muscle (Gys1), found in Rattus norvegicus (Rat).